Here is a 319-residue protein sequence, read N- to C-terminus: Homoserine kinase (319 aa).

Proline 100–serine 110 serves as a coordination point for ATP.

It belongs to the GHMP kinase family. Homoserine kinase subfamily.

It localises to the cytoplasm. The enzyme catalyses L-homoserine + ATP = O-phospho-L-homoserine + ADP + H(+). The protein operates within amino-acid biosynthesis; L-threonine biosynthesis; L-threonine from L-aspartate: step 4/5. In terms of biological role, catalyzes the ATP-dependent phosphorylation of L-homoserine to L-homoserine phosphate. The chain is Homoserine kinase from Chloroherpeton thalassium (strain ATCC 35110 / GB-78).